The sequence spans 278 residues: tRNA pseudouridine synthase A (278 aa).

Catalysis depends on Asp-52, which acts as the Nucleophile. Tyr-111 contacts substrate. Over residues 253 to 264 (AKAGPLEAAPLG) the composition is skewed to low complexity. Residues 253-278 (AKAGPLEAAPLGEAPLKEATLKEDWR) are disordered. Basic and acidic residues predominate over residues 267–278 (PLKEATLKEDWR).

The protein belongs to the tRNA pseudouridine synthase TruA family. Homodimer.

The catalysed reaction is uridine(38/39/40) in tRNA = pseudouridine(38/39/40) in tRNA. In terms of biological role, formation of pseudouridine at positions 38, 39 and 40 in the anticodon stem and loop of transfer RNAs. The sequence is that of tRNA pseudouridine synthase A from Rhodospirillum rubrum (strain ATCC 11170 / ATH 1.1.1 / DSM 467 / LMG 4362 / NCIMB 8255 / S1).